A 267-amino-acid polypeptide reads, in one-letter code: Small ribosomal subunit protein uS3 (267 aa).

The region spanning 39-114 (IRKYLETNLK…RVNINIVEIR (76 aa)) is the KH type-2 domain. Residues 229-248 (ANNRGRGNNRGRGNSRQNGG) show a composition bias toward low complexity. The interval 229–267 (ANNRGRGNNRGRGNSRQNGGRSRRPRQGQASTQGRGGNN) is disordered.

The protein belongs to the universal ribosomal protein uS3 family. Part of the 30S ribosomal subunit. Forms a tight complex with proteins S10 and S14.

In terms of biological role, binds the lower part of the 30S subunit head. Binds mRNA in the 70S ribosome, positioning it for translation. The protein is Small ribosomal subunit protein uS3 of Oenococcus oeni (strain ATCC BAA-331 / PSU-1).